The primary structure comprises 219 residues: Cytidylate kinase (219 aa).

ATP is bound at residue 10–18 (GPAAAGKST).

This sequence belongs to the cytidylate kinase family. Type 1 subfamily.

It is found in the cytoplasm. It carries out the reaction CMP + ATP = CDP + ADP. The enzyme catalyses dCMP + ATP = dCDP + ADP. In Staphylococcus aureus (strain JH9), this protein is Cytidylate kinase.